Here is a 179-residue protein sequence, read N- to C-terminus: Adenine phosphoribosyltransferase (179 aa).

The protein belongs to the purine/pyrimidine phosphoribosyltransferase family. In terms of assembly, homodimer.

The protein localises to the cytoplasm. The enzyme catalyses AMP + diphosphate = 5-phospho-alpha-D-ribose 1-diphosphate + adenine. It participates in purine metabolism; AMP biosynthesis via salvage pathway; AMP from adenine: step 1/1. Functionally, catalyzes a salvage reaction resulting in the formation of AMP, that is energically less costly than de novo synthesis. The polypeptide is Adenine phosphoribosyltransferase (Ruegeria pomeroyi (strain ATCC 700808 / DSM 15171 / DSS-3) (Silicibacter pomeroyi)).